The primary structure comprises 60 residues: Mastoparan-VT4 (60 aa).

A signal peptide spans 1-27 (MKNPILILFTAFIALLGFFGMSAEALA). AXPX repeat units follow at residues 27–30 (ADPK), 31–34 (ADPL), 35–38 (AGPN), and 41–44 (ADPE). The propeptide occupies 28–45 (DPKADPLAGPNPDADPEA). Leucine 59 carries the leucine amide modification.

This sequence belongs to the MCD family. Mastoparan subfamily. As to expression, expressed by the venom gland.

Its subcellular location is the secreted. The synthetic peptide shows antimicrobial activities against Gram-negative bacteria (but not against all strains tested), Gram-positive bacteria (not all strains tested) and the fungi C.albicans and C.parapsilosis. Exhibits little hemolytic activity against washed human erythrocytes. The chain is Mastoparan-VT4 from Vespa tropica (Greater banded hornet).